The sequence spans 689 residues: Ribonuclease J (689 aa).

Residues 1 to 88 (MTDNNQNNEN…RNYAQEELDS (88 aa)) form a disordered region. Basic and acidic residues predominate over residues 9 to 24 (ENHENSSENSKADEMR). The span at 56 to 78 (HHKKEHRPNKKPNNHHKQKHAKT) shows a compositional bias: basic residues. 2 positions are modified to N6-acetyllysine: K132 and K138. Zn(2+)-binding residues include H206, H208, D210, H211, H275, and D297. 3 positions are modified to N6-acetyllysine: K321, K335, and K395. 498-502 (HVSGH) is a binding site for substrate. K509 carries the post-translational modification N6-acetyllysine. H524 contributes to the Zn(2+) binding site. 3 positions are modified to N6-acetyllysine: K545, K632, and K647.

Belongs to the metallo-beta-lactamase superfamily. RNA-metabolizing metallo-beta-lactamase-like family. Bacterial RNase J subfamily. Homodimer. Homotetramer; dimer of homodimers. Interacts with RNA helicase RhpA, might be a member of a minimal RNA degradosome complex. Requires Zn(2+) as cofactor. Post-translationally, acetylated on nine lysine residues. Some of the residues are acetylated by multiple different mechanisms. RimL is partially responsible for the acetylation of Lys-321, Lys-395 and Lys-647. HPB8_1270 homolog is partially responsible for the acetylation of Lys-321, Lys-395, Lys-509 and Lys-647. Acetyl-phosphate-mediated non-enzymatic acetylation pathway takes part in the acetylation of Lys-132, Lys-321, Lys-395, Lys-509 and Lys-647. Acetylation of the remaining residues Lys-138, Lys-335, Lys-545 and Lys-632 occurs by a yet undetermined mechanism. Acetylation on a number of these residues is important for growth regulation and proper cell morphology.

Its subcellular location is the cytoplasm. Catalytic activity is regulated by the balance between homodimers and homotetramers, with homotetramers being the active forms of this enzyme. Acetylation allosterically regulates the homooligomerization state and hence the catalytic activity. An RNase that has 5'-3' exoribonuclease and endoribonuclease activity. Degrades 5'-monophosphorylated ssRNA and dsRNA, considerably more active on ssRNA. Association with RhpA significantly increases the dsRNase activity. Degrades RNA substrate with hairpin structures at both ends with low activity, but presence of RhpA significantly increases the activity on this substrate. Stimulates ATPase activity of RNA helicase RhpA. Involved in stabilization of mRNA but apparently not rRNA. The chain is Ribonuclease J from Helicobacter pylori (strain ATCC 700392 / 26695) (Campylobacter pylori).